The sequence spans 166 residues: Mitochondrial fission process protein 1 (166 aa).

2 helical membrane passes run 34 to 54 (SLVPAAVVWLSYGVASSYVLA) and 80 to 100 (AVVDTFVWQALASVAIPGFTI). Lys123 is modified (N6-succinyllysine). A helical membrane pass occupies residues 129 to 149 (LGLLTIPIIIHPIDRSVDFLL).

It belongs to the MTFP1 family.

Its subcellular location is the mitochondrion inner membrane. Its function is as follows. Involved in the mitochondrial division probably by regulating membrane fission. Loss-of-function induces the release of cytochrome c, which activates the caspase cascade and leads to apoptosis. The protein is Mitochondrial fission process protein 1 (MTFP1) of Homo sapiens (Human).